A 175-amino-acid chain; its full sequence is Alpha-crystallin B chain (175 aa).

N-acetylmethionine is present on Met-1. At Ser-19 the chain carries Phosphoserine. O-linked (GlcNAc) serine glycosylation occurs at Ser-41. Ser-45 and Ser-59 each carry phosphoserine. A sHSP domain is found at 56–164 (RAPSWIDTGL…PERTIPITRE (109 aa)). His-83 lines the Zn(2+) pocket. The residue at position 92 (Lys-92) is an N6-acetyllysine. Residues His-104, Glu-106, His-111, and His-119 each contribute to the Zn(2+) site. The tract at residues 142–175 (VLTVNGPRKQAPGPERTIPITREEKPAVTAAPKK) is disordered. The residue at position 166 (Lys-166) is an N6-acetyllysine. Thr-170 carries O-linked (GlcNAc) threonine glycosylation.

The protein belongs to the small heat shock protein (HSP20) family. As to quaternary structure, heteromer composed of three CRYAA and one CRYAB subunits. Aggregates with homologous proteins, including the small heat shock protein HSPB1, to form large heteromeric complexes. Inter-subunit bridging via zinc ions enhances stability, which is crucial as there is no protein turn over in the lens. Interacts with HSPBAP1 and TTN/titin. Interacts with TMEM109; in the cellular response to DNA damage. Interacts with DES; binds rapidly during early stages of DES filament assembly and a reduced binding seen in the later stages. Interacts with TMED10; the interaction mediates the translocation from the cytoplasm into the ERGIC (endoplasmic reticulum-Golgi intermediate compartment) and thereby secretion. Interacts with ATP6V1A and with MTOR, forming a ternary complex. Lens as well as other tissues.

The protein localises to the cytoplasm. The protein resides in the nucleus. It is found in the secreted. It localises to the lysosome. Its function is as follows. May contribute to the transparency and refractive index of the lens. Has chaperone-like activity, preventing aggregation of various proteins under a wide range of stress conditions. In lens epithelial cells, stabilizes the ATP6V1A protein, preventing its degradation by the proteasome. This chain is Alpha-crystallin B chain (CRYAB), found in Oryctolagus cuniculus (Rabbit).